A 721-amino-acid polypeptide reads, in one-letter code: Catalase-peroxidase (721 aa).

The tryptophyl-tyrosyl-methioninium (Trp-Tyr) (with M-238) cross-link spans 89–212; the sequence is WHSAGTYRTG…LAAVQMGLIY (124 aa). His-90 acts as the Proton acceptor in catalysis. The tryptophyl-tyrosyl-methioninium (Tyr-Met) (with W-89) cross-link spans 212-238; the sequence is YVNPEGPNGDPDPFAAAVDIRETFARM. His-253 lines the heme b pocket.

This sequence belongs to the peroxidase family. Peroxidase/catalase subfamily. Homodimer or homotetramer. It depends on heme b as a cofactor. Formation of the three residue Trp-Tyr-Met cross-link is important for the catalase, but not the peroxidase activity of the enzyme.

It catalyses the reaction H2O2 + AH2 = A + 2 H2O. It carries out the reaction 2 H2O2 = O2 + 2 H2O. Bifunctional enzyme with both catalase and broad-spectrum peroxidase activity. This Shewanella baltica (strain OS195) protein is Catalase-peroxidase.